A 536-amino-acid chain; its full sequence is Putative UDP-glucuronosyltransferase ugt-47 (536 aa).

The N-terminal stretch at 1–21 is a signal peptide; that stretch reads MFRYHSILLLAILYFFEYGLA. 2 N-linked (GlcNAc...) asparagine glycosylation sites follow: Asn52 and Asn308. A helical membrane pass occupies residues 497 to 517; sequence IIVPCFFVAFYFIIFPFFKLF.

The protein belongs to the UDP-glycosyltransferase family.

It is found in the membrane. The catalysed reaction is glucuronate acceptor + UDP-alpha-D-glucuronate = acceptor beta-D-glucuronoside + UDP + H(+). In Caenorhabditis elegans, this protein is Putative UDP-glucuronosyltransferase ugt-47 (ugt-47).